Reading from the N-terminus, the 376-residue chain is Cyclic GMP-AMP synthase-like receptor 1 (376 aa).

Mg(2+) is bound by residues Glu-77 and Asp-79.

The protein belongs to the mab-21 family. Mg(2+) serves as cofactor. It depends on Mn(2+) as a cofactor.

The catalysed reaction is UTP + ATP = 3',3'-cUAMP + 2 diphosphate. Functionally, nucleotidyltransferase that catalyzes the formation of cyclic UMP-AMP (3',3'-cUAMP) from ATP and UTP and plays a key role in innate immunity. Acts as a key sensor of double-stranded RNA (dsRNA), the presence of dsRNA in the cytoplasm being a danger signal that triggers the immune responses. Directly binds dsRNA, activating the nucleotidyltransferase activity, leading to synthesis of 3',3'-cUAMP, a second messenger that binds to and activates Sting, thereby triggering the immune response via activation of the NF-kappa-B transcription factor. The polypeptide is Cyclic GMP-AMP synthase-like receptor 1 (Stylophora pistillata (Smooth cauliflower coral)).